A 409-amino-acid polypeptide reads, in one-letter code: Accessory Sec system protein translocase subunit SecY2 (409 aa).

Transmembrane regions (helical) follow at residues 16–36, 61–81, 104–124, 132–152, 161–181, 190–210, 242–262, 286–306, 341–361, and 374–394; these read ILIT…PIPG, LSQV…MILL, VVML…FQYH, LLLA…IGNL, MTIL…PLIF, LAII…ITFE, GMAF…IILL, GVVI…FVNI, LFGT…LLFA, and TGIF…FQVI.

The protein belongs to the SecY/SEC61-alpha family. SecY2 subfamily. As to quaternary structure, component of the accessory SecA2/SecY2 protein translocase complex required to export cell wall proteins. May form heterotrimers with SecE and SecG subunits.

The protein resides in the cell membrane. Its function is as follows. Part of the accessory SecA2/SecY2 system specifically required for export of possible cell wall proteins. The central subunit of a protein translocation channel. The sequence is that of Accessory Sec system protein translocase subunit SecY2 from Streptococcus agalactiae serotype III (strain NEM316).